The sequence spans 488 residues: Rhamnulokinase (488 aa).

Residue 13 to 17 (ASSGR) coordinates ATP. A disulfide bridge links Cys-68 with Cys-222. Substrate is bound by residues Gly-83 and 236-238 (HDT). The Proton acceptor role is filled by Asp-237. Thr-259 is an ATP binding site. Asn-296 contacts substrate. Gln-304 contacts ATP. A disulfide bond links Cys-353 and Cys-370. Gly-402 serves as a coordination point for ATP. Cys-413 and Cys-417 are joined by a disulfide.

Belongs to the rhamnulokinase family. The cofactor is Mg(2+).

It catalyses the reaction L-rhamnulose + ATP = L-rhamnulose 1-phosphate + ADP + H(+). It functions in the pathway carbohydrate degradation; L-rhamnose degradation; glycerone phosphate from L-rhamnose: step 2/3. In terms of biological role, involved in the catabolism of L-rhamnose (6-deoxy-L-mannose). Catalyzes the transfer of the gamma-phosphate group from ATP to the 1-hydroxyl group of L-rhamnulose to yield L-rhamnulose 1-phosphate. This chain is Rhamnulokinase, found in Klebsiella pneumoniae (strain 342).